The primary structure comprises 491 residues: Probable folate-biopterin transporter 4 (491 aa).

The next 6 helical transmembrane spans lie at 14-34 (VAFL…SFVW), 52-72 (SQFV…YGII), 84-104 (TPYL…LGLD), 112-132 (LYLM…DVVI), 154-174 (VSWF…GYAL), and 179-199 (IETI…SCAL). A disordered region spans residues 222–262 (KSLTSNDNYPDTSKSNTRRRKGQKKGKKGDSNGKSETQKKQ). Over residues 224-236 (LTSNDNYPDTSKS) the composition is skewed to polar residues. Residues 237-248 (NTRRRKGQKKGK) show a composition bias toward basic residues. A compositionally biased stretch (basic and acidic residues) spans 249–260 (KGDSNGKSETQK). The next 6 membrane-spanning stretches (helical) occupy residues 294 to 314 (MAWF…MFYY), 323 to 343 (AAFL…GTFI), 356 to 376 (SLLF…VLVS), 389 to 411 (MVLF…FLIL), 437 to 457 (TVGS…SGSF), and 461 to 481 (FMGL…LFLI).

This sequence belongs to the major facilitator superfamily. Folate-biopterin transporter (TC 2.A.71) family.

The protein resides in the membrane. Its function is as follows. Could mediate folate transport. This is Probable folate-biopterin transporter 4 from Arabidopsis thaliana (Mouse-ear cress).